Here is a 487-residue protein sequence, read N- to C-terminus: Kynureninase 1 (487 aa).

Pyridoxal 5'-phosphate contacts are provided by residues L149, T150, F177–D180, S234, D263, H266, and Y288. N6-(pyridoxal phosphate)lysine is present on K289. Pyridoxal 5'-phosphate is bound by residues W329 and N357.

The protein belongs to the kynureninase family. In terms of assembly, homodimer. Pyridoxal 5'-phosphate serves as cofactor.

It is found in the cytoplasm. It catalyses the reaction L-kynurenine + H2O = anthranilate + L-alanine + H(+). The enzyme catalyses 3-hydroxy-L-kynurenine + H2O = 3-hydroxyanthranilate + L-alanine + H(+). It functions in the pathway amino-acid degradation; L-kynurenine degradation; L-alanine and anthranilate from L-kynurenine: step 1/1. The protein operates within cofactor biosynthesis; NAD(+) biosynthesis; quinolinate from L-kynurenine: step 2/3. In terms of biological role, catalyzes the cleavage of L-kynurenine (L-Kyn) and L-3-hydroxykynurenine (L-3OHKyn) into anthranilic acid (AA) and 3-hydroxyanthranilic acid (3-OHAA), respectively. The protein is Kynureninase 1 (bna5-1) of Emericella nidulans (strain FGSC A4 / ATCC 38163 / CBS 112.46 / NRRL 194 / M139) (Aspergillus nidulans).